The chain runs to 130 residues: Small ribosomal subunit protein uS9 (130 aa).

This sequence belongs to the universal ribosomal protein uS9 family.

In Burkholderia multivorans (strain ATCC 17616 / 249), this protein is Small ribosomal subunit protein uS9.